The primary structure comprises 899 residues: Protein translocase subunit SecA (899 aa).

ATP is bound by residues glutamine 89, 107 to 111, and aspartate 502; that span reads GEGKT. Zn(2+) is bound by residues cysteine 882, cysteine 884, cysteine 893, and histidine 894.

It belongs to the SecA family. In terms of assembly, monomer and homodimer. Part of the essential Sec protein translocation apparatus which comprises SecA, SecYEG and auxiliary proteins SecDF-YajC and YidC. Zn(2+) is required as a cofactor.

It localises to the cell inner membrane. Its subcellular location is the cytoplasm. The enzyme catalyses ATP + H2O + cellular proteinSide 1 = ADP + phosphate + cellular proteinSide 2.. Part of the Sec protein translocase complex. Interacts with the SecYEG preprotein conducting channel. Has a central role in coupling the hydrolysis of ATP to the transfer of proteins into and across the cell membrane, serving both as a receptor for the preprotein-SecB complex and as an ATP-driven molecular motor driving the stepwise translocation of polypeptide chains across the membrane. The sequence is that of Protein translocase subunit SecA from Allorhizobium ampelinum (strain ATCC BAA-846 / DSM 112012 / S4) (Agrobacterium vitis (strain S4)).